Here is a 299-residue protein sequence, read N- to C-terminus: Oxygen-dependent coproporphyrinogen-III oxidase (299 aa).

Residue serine 92 coordinates substrate. Residues histidine 96 and histidine 106 each contribute to the a divalent metal cation site. The active-site Proton donor is the histidine 106. 108–110 (NVR) contacts substrate. A divalent metal cation contacts are provided by histidine 145 and histidine 175. Residues 240–275 (YVEFNLVWDRGTLFGLQTGGRTESILMSMPPLVRWE) are important for dimerization. 258 to 260 (GGR) lines the substrate pocket.

This sequence belongs to the aerobic coproporphyrinogen-III oxidase family. As to quaternary structure, homodimer. A divalent metal cation is required as a cofactor.

The protein localises to the cytoplasm. The enzyme catalyses coproporphyrinogen III + O2 + 2 H(+) = protoporphyrinogen IX + 2 CO2 + 2 H2O. It functions in the pathway porphyrin-containing compound metabolism; protoporphyrin-IX biosynthesis; protoporphyrinogen-IX from coproporphyrinogen-III (O2 route): step 1/1. Its function is as follows. Involved in the heme biosynthesis. Catalyzes the aerobic oxidative decarboxylation of propionate groups of rings A and B of coproporphyrinogen-III to yield the vinyl groups in protoporphyrinogen-IX. This Salmonella enteritidis PT4 (strain P125109) protein is Oxygen-dependent coproporphyrinogen-III oxidase.